The sequence spans 610 residues: Pentatricopeptide repeat-containing protein At5g40400 (610 aa).

PPR repeat units follow at residues Asp-165 to Val-199, Ser-200 to Pro-234, Asn-235 to Pro-269, Asp-270 to Pro-304, Asp-305 to Pro-339, Asp-340 to Pro-374, Asp-375 to Ile-409, Pro-410 to Ala-445, Lys-446 to Leu-480, Asp-481 to Pro-515, Asp-516 to Glu-546, and Asp-551 to Pro-586.

The protein belongs to the PPR family. P subfamily.

The chain is Pentatricopeptide repeat-containing protein At5g40400 from Arabidopsis thaliana (Mouse-ear cress).